The chain runs to 180 residues: Ubiquitin-conjugating enzyme E2 20 (180 aa).

A disordered region spans residues 1-33; sequence MAAVNGYQGNTPADPPASNGSKQPAAPTKTVDS. Positions 35-180 constitute a UBC core domain; sequence SVLKRLQSEL…VEKLYKPPSA (146 aa). Cysteine 119 acts as the Glycyl thioester intermediate in catalysis.

The protein belongs to the ubiquitin-conjugating enzyme family. As to expression, expressed in all tissues with cell division activities and in mature leaves.

The enzyme catalyses S-ubiquitinyl-[E1 ubiquitin-activating enzyme]-L-cysteine + [E2 ubiquitin-conjugating enzyme]-L-cysteine = [E1 ubiquitin-activating enzyme]-L-cysteine + S-ubiquitinyl-[E2 ubiquitin-conjugating enzyme]-L-cysteine.. It participates in protein modification; protein ubiquitination. Functionally, accepts the ubiquitin from the E1 complex and catalyzes its covalent attachment to other proteins. The sequence is that of Ubiquitin-conjugating enzyme E2 20 (UBC20) from Arabidopsis thaliana (Mouse-ear cress).